Here is a 68-residue protein sequence, read N- to C-terminus: Large ribosomal subunit protein bL32 (68 aa).

The protein belongs to the bacterial ribosomal protein bL32 family.

The protein is Large ribosomal subunit protein bL32 of Onion yellows phytoplasma (strain OY-M).